A 265-amino-acid polypeptide reads, in one-letter code: Aquaporin-5 (265 aa).

The Cytoplasmic portion of the chain corresponds to 1–12 (MKKEVCSVAFLK). A helical transmembrane segment spans residues 13–33 (AVFAEFLATLIFVFFGLGSAL). At 34–39 (KWPSAL) the chain is on the extracellular side. A helical membrane pass occupies residues 40-60 (PTILQIALAFGLAIGTLAQAL). Topologically, residues 61–65 (GPVSG) are cytoplasmic. Positions 66–74 (GHINPAITL) form an intramembrane region, discontinuously helical. The NPA 1 signature appears at 69 to 71 (NPA). Residues 75–87 (ALLVGNQISLLRA) lie on the Cytoplasmic side of the membrane. The helical transmembrane segment at 88–108 (FFYVAAQLVGAIAGAGILYGV) threads the bilayer. At 109 to 126 (APLNARGNLAVNALNNNT) the chain is on the extracellular side. Asparagine 124 and asparagine 125 each carry an N-linked (GlcNAc...) asparagine glycan. The helical transmembrane segment at 127 to 147 (TQGQAMVVELILTFQLALCIF) threads the bilayer. Over 148 to 158 (ASTDSRRTSPV) the chain is Cytoplasmic. Residues 159–179 (GSPALSIGLSVTLGHLVGIYF) form a helical membrane-spanning segment. Position 180 (threonine 180) is a topological domain, extracellular. An intramembrane region (discontinuously helical) is located at residues 181-191 (GCSMNPARSFG). An NPA 2 motif is present at residues 185 to 187 (NPA). Residues 192-203 (PAVVMNRFSPAH) are Extracellular-facing. A helical membrane pass occupies residues 204-224 (WVFWVGPIVGAVLAAILYFYL). Residues 225–265 (LFPNSLSLSERVAIIKGTYEPDEDWEEQREERKKTMELTTR) are Cytoplasmic-facing.

This sequence belongs to the MIP/aquaporin (TC 1.A.8) family. In terms of assembly, homotetramer; each monomer provides an independent water pore. Interacts with TRPV4; the interaction is probably indirect and regulates TRPV4 activation by hypotonicity. In terms of tissue distribution, detected in skin eccrine sweat glands, at the apical cell membrane and at intercellular canaliculi (at protein level).

The protein localises to the apical cell membrane. It localises to the cell membrane. The protein resides in the cytoplasmic vesicle membrane. It catalyses the reaction H2O(in) = H2O(out). Functionally, aquaporins form homotetrameric transmembrane channels, with each monomer independently mediating water transport across the plasma membrane along its osmotic gradient. Plays an important role in fluid secretion in salivary glands. Required for TRPV4 activation by hypotonicity. Together with TRPV4, controls regulatory volume decrease in salivary epithelial cells. Seems to play a redundant role in water transport in the eye, lung and in sweat glands. In Homo sapiens (Human), this protein is Aquaporin-5.